We begin with the raw amino-acid sequence, 94 residues long: Phosphoribosyl-ATP pyrophosphatase (94 aa).

Belongs to the PRA-PH family.

The protein resides in the cytoplasm. The catalysed reaction is 1-(5-phospho-beta-D-ribosyl)-ATP + H2O = 1-(5-phospho-beta-D-ribosyl)-5'-AMP + diphosphate + H(+). It participates in amino-acid biosynthesis; L-histidine biosynthesis; L-histidine from 5-phospho-alpha-D-ribose 1-diphosphate: step 2/9. This Saccharolobus islandicus (strain M.16.27) (Sulfolobus islandicus) protein is Phosphoribosyl-ATP pyrophosphatase.